A 71-amino-acid chain; its full sequence is MSFFHVVFVAFVIAAIGAAGWFVTPKGKNQTLLRTSLLLTLTCCYLMWAITYLCQLHPLITPRRSDLRMEY.

The Lumenal segment spans residues methionine 1 to serine 2. Residues phenylalanine 3–valine 23 form a helical membrane-spanning segment. Topologically, residues threonine 24–threonine 35 are cytoplasmic. The chain crosses the membrane as a helical span at residues serine 36–leucine 56. Over histidine 57–tyrosine 71 the chain is Lumenal.

It belongs to the V-ATPase e1/e2 subunit family. V-ATPase is a heteromultimeric enzyme composed of a peripheral catalytic V1 complex (components A to H) attached to an integral membrane V0 proton pore complex (components: a, c, c', c'', d, e, f and VOA1).

It is found in the vacuole membrane. Its function is as follows. Subunit of the V0 complex of vacuolar(H+)-ATPase (V-ATPase), a multisubunit enzyme composed of a peripheral complex (V1) that hydrolyzes ATP and a membrane integral complex (V0) that translocates protons. V-ATPase is responsible for acidifying and maintaining the pH of intracellular compartments. In Cryptococcus neoformans var. neoformans serotype D (strain JEC21 / ATCC MYA-565) (Filobasidiella neoformans), this protein is V-type proton ATPase subunit e (VMA9).